Consider the following 387-residue polypeptide: Succinate--CoA ligase [ADP-forming] subunit beta (387 aa).

An ATP-grasp domain is found at 9–243; it reads KEILSTYGIP…YSQLDPLEIT (235 aa). ATP contacts are provided by residues Lys45, 52–54, Glu98, Val101, and Glu106; that span reads GRG. Positions 198 and 212 each coordinate Mg(2+). Residues Asn263 and 320–322 each bind substrate; that span reads GIM.

It belongs to the succinate/malate CoA ligase beta subunit family. As to quaternary structure, heterotetramer of two alpha and two beta subunits. The cofactor is Mg(2+).

The catalysed reaction is succinate + ATP + CoA = succinyl-CoA + ADP + phosphate. It catalyses the reaction GTP + succinate + CoA = succinyl-CoA + GDP + phosphate. Its pathway is carbohydrate metabolism; tricarboxylic acid cycle; succinate from succinyl-CoA (ligase route): step 1/1. Its function is as follows. Succinyl-CoA synthetase functions in the citric acid cycle (TCA), coupling the hydrolysis of succinyl-CoA to the synthesis of either ATP or GTP and thus represents the only step of substrate-level phosphorylation in the TCA. The beta subunit provides nucleotide specificity of the enzyme and binds the substrate succinate, while the binding sites for coenzyme A and phosphate are found in the alpha subunit. This is Succinate--CoA ligase [ADP-forming] subunit beta from Trichlorobacter lovleyi (strain ATCC BAA-1151 / DSM 17278 / SZ) (Geobacter lovleyi).